Consider the following 185-residue polypeptide: Photosystem I assembly protein Ycf4 (185 aa).

2 consecutive transmembrane segments (helical) span residues 24–44 (YIIG…SISS) and 58–78 (ALLF…ANLL).

Belongs to the Ycf4 family.

The protein localises to the cellular thylakoid membrane. In terms of biological role, seems to be required for the assembly of the photosystem I complex. This Prochlorococcus marinus (strain MIT 9215) protein is Photosystem I assembly protein Ycf4.